The sequence spans 1919 residues: Disks large homolog 5 (1919 aa).

The segment at Ala98–Val142 is disordered. Residues Ser109–Ser123 show a composition bias toward low complexity. A phosphoserine mark is found at Ser264 and Ser295. Residues Leu383–Leu599 are a coiled coil. PDZ domains lie at Val620–Lys710 and Val705–Phe796. Ser900 is subject to Phosphoserine. Disordered stretches follow at residues Gly927–Lys1122, Gln1150–Thr1187, Ser1201–Arg1230, Glu1245–Ser1264, and Ala1271–Pro1306. Thr984 carries the phosphothreonine modification. Position 1000 is a phosphoserine (Ser1000). Thr1011 carries the post-translational modification Phosphothreonine. Over residues Arg1017–Thr1030 the composition is skewed to basic and acidic residues. The residue at position 1021 (Ser1021) is a Phosphoserine. Over residues Thr1045–Val1055 the composition is skewed to pro residues. The residue at position 1183 (Thr1183) is a Phosphothreonine. 2 positions are modified to phosphoserine: Ser1209 and Ser1263. Composition is skewed to low complexity over residues Ser1252–Ser1264 and Arg1284–Glu1298. Ser1334 carries the phosphoserine modification. One can recognise a PDZ 3 domain in the interval His1350 to Pro1429. The tract at residues Leu1434–Ala1493 is disordered. Polar residues predominate over residues Thr1449 to Glu1462. The region spanning Arg1501–Pro1582 is the PDZ 4 domain. One can recognise an SH3 domain in the interval Gly1593–Phe1661. Phosphoserine is present on Ser1666. The region spanning Asp1722–Asn1905 is the Guanylate kinase-like domain.

Belongs to the MAGUK family. Interacts with MPP1. Interacts with CTNNB1 and with the third SH3 domain of SORBS3 to form a ternary complex. Interacts (via coiled-coil domain) with MARK3. Interacts (via PDZ domain 3) with STK3/MST2 and STK4/MST1. Interacts with SCRIB. Interacts with CTNB1, SMO and (via PDZ4 or guanylate kinase-like domain) with KIF7. Highly expressed in normal breast tissues and low-grade breast cancer tissues (at protein level). Highly expressed in the placenta and prostate. Expressed at a lower level in the thyroid, spinal cord, trachea, adrenal gland, skeletal muscle, pancreas, heart, brain, liver and kidney. A short splice product shows more limited expression, being absent from at least the brain.

The protein resides in the cell junction. It is found in the cell membrane. The protein localises to the postsynaptic density. Its subcellular location is the cytoplasm. It localises to the cytoskeleton. The protein resides in the cilium basal body. Its function is as follows. Acts as a regulator of the Hippo signaling pathway. Negatively regulates the Hippo signaling pathway by mediating the interaction of MARK3 with STK3/4, bringing them together to promote MARK3-dependent hyperphosphorylation and inactivation of STK3 kinase activity toward LATS1. Positively regulates the Hippo signaling pathway by mediating the interaction of SCRIB with STK4/MST1 and LATS1 which is important for the activation of the Hippo signaling pathway. Involved in regulating cell proliferation, maintenance of epithelial polarity, epithelial-mesenchymal transition (EMT), cell migration and invasion. Plays an important role in dendritic spine formation and synaptogenesis in cortical neurons; regulates synaptogenesis by enhancing the cell surface localization of N-cadherin. Acts as a positive regulator of hedgehog (Hh) signaling pathway. Plays a critical role in the early point of the SMO activity cycle by interacting with SMO at the ciliary base to induce the accumulation of KIF7 and GLI2 at the ciliary tip for GLI2 activation. The protein is Disks large homolog 5 (DLG5) of Homo sapiens (Human).